Here is a 356-residue protein sequence, read N- to C-terminus: MNTFGSKLRLTTFGESHGKAIGGVLDGFPAGVAIDEEFLQSEMDKRKPGGKYATSRKEADEVEILSGIFEGFSTGTPIGFIIKNSNQHSKDYDSIKDLFRPGHADFTYFSKFGVRDHRGGGRSSARETAVRVAAGAFGAMMLKEFDIDIKSGVFSIGKLKSNKIDFEFASKSEIFMLDSDIEEDAKNLILDVKNSNDSVGAATLTIINGVPAGLGEVLYDKLDARLAAAMMGINGVKGVEIGLGSQASFILGSQNNDFMDKNGFMSNNAGGILGGISNGEPIMIKTYFKPTPSIFKDQPTINLNGDEVTCALRGRHDPCIGIRGSVVANAMARLVISDMLLLNASSKLSNLKKIYS.

Position 46 (R46) interacts with NADP(+). FMN-binding positions include 122-124, 234-235, G274, 289-293, and R315; these read RSS, NG, and KPTPS.

Belongs to the chorismate synthase family. As to quaternary structure, homotetramer. FMNH2 is required as a cofactor.

The enzyme catalyses 5-O-(1-carboxyvinyl)-3-phosphoshikimate = chorismate + phosphate. It functions in the pathway metabolic intermediate biosynthesis; chorismate biosynthesis; chorismate from D-erythrose 4-phosphate and phosphoenolpyruvate: step 7/7. In terms of biological role, catalyzes the anti-1,4-elimination of the C-3 phosphate and the C-6 proR hydrogen from 5-enolpyruvylshikimate-3-phosphate (EPSP) to yield chorismate, which is the branch point compound that serves as the starting substrate for the three terminal pathways of aromatic amino acid biosynthesis. This reaction introduces a second double bond into the aromatic ring system. The protein is Chorismate synthase of Campylobacter fetus subsp. fetus (strain 82-40).